The sequence spans 259 residues: Small ribosomal subunit protein mS23 (259 aa).

A compositionally biased stretch (polar residues) spans 230-244 (RAASFTGSALPSSEE). A disordered region spans residues 230 to 259 (RAASFTGSALPSSEESAPVDEETEKVPQQV).

The protein belongs to the mitochondrion-specific ribosomal protein mS23 family. In terms of assembly, component of the mitochondrial small ribosomal subunit.

It is found in the mitochondrion. This is Small ribosomal subunit protein mS23 (rsm25) from Aspergillus terreus (strain NIH 2624 / FGSC A1156).